A 151-amino-acid chain; its full sequence is uncharacterized protein (151 aa).

This is an uncharacterized protein from Lepidoptera (butterflies and moths).